A 379-amino-acid polypeptide reads, in one-letter code: Histidinol-phosphate aminotransferase (379 aa).

Position 231 is an N6-(pyridoxal phosphate)lysine (Lys231).

This sequence belongs to the class-II pyridoxal-phosphate-dependent aminotransferase family. Histidinol-phosphate aminotransferase subfamily. In terms of assembly, homodimer. It depends on pyridoxal 5'-phosphate as a cofactor.

The enzyme catalyses L-histidinol phosphate + 2-oxoglutarate = 3-(imidazol-4-yl)-2-oxopropyl phosphate + L-glutamate. The protein operates within amino-acid biosynthesis; L-histidine biosynthesis; L-histidine from 5-phospho-alpha-D-ribose 1-diphosphate: step 7/9. The protein is Histidinol-phosphate aminotransferase of Mycolicibacterium smegmatis (strain ATCC 700084 / mc(2)155) (Mycobacterium smegmatis).